A 166-amino-acid chain; its full sequence is Monothiol glutaredoxin-3 (166 aa).

Positions 56 to 159 (DSTDFEVFLE…STLDEWTHNK (104 aa)) constitute a Glutaredoxin domain. Cys76 is a [2Fe-2S] cluster binding site.

This sequence belongs to the glutaredoxin family. Monothiol subfamily. In terms of assembly, homodimer.

The protein resides in the nucleus. Functionally, monothiol glutaredoxin involved in the biogenesis of iron-sulfur clusters. Binds one iron-sulfur cluster per dimer. The iron-sulfur cluster is bound between subunits, and is complexed by a bound glutathione and a cysteine residue from each subunit. In Schizosaccharomyces pombe (strain 972 / ATCC 24843) (Fission yeast), this protein is Monothiol glutaredoxin-3 (grx3).